The sequence spans 137 residues: Nucleoside diphosphate kinase (137 aa).

6 residues coordinate ATP: Lys-9, Phe-57, Arg-85, Thr-91, Arg-102, and Asn-112. His-115 (pros-phosphohistidine intermediate) is an active-site residue.

This sequence belongs to the NDK family. As to quaternary structure, homotetramer. The cofactor is Mg(2+).

The protein localises to the cytoplasm. It carries out the reaction a 2'-deoxyribonucleoside 5'-diphosphate + ATP = a 2'-deoxyribonucleoside 5'-triphosphate + ADP. It catalyses the reaction a ribonucleoside 5'-diphosphate + ATP = a ribonucleoside 5'-triphosphate + ADP. Major role in the synthesis of nucleoside triphosphates other than ATP. The ATP gamma phosphate is transferred to the NDP beta phosphate via a ping-pong mechanism, using a phosphorylated active-site intermediate. This chain is Nucleoside diphosphate kinase, found in Campylobacter lari (strain RM2100 / D67 / ATCC BAA-1060).